The following is a 352-amino-acid chain: N-acetyl-gamma-glutamyl-phosphate reductase (352 aa).

Cys-156 is an active-site residue.

This sequence belongs to the NAGSA dehydrogenase family. Type 1 subfamily.

Its subcellular location is the cytoplasm. It catalyses the reaction N-acetyl-L-glutamate 5-semialdehyde + phosphate + NADP(+) = N-acetyl-L-glutamyl 5-phosphate + NADPH + H(+). Its pathway is amino-acid biosynthesis; L-arginine biosynthesis; N(2)-acetyl-L-ornithine from L-glutamate: step 3/4. Catalyzes the NADPH-dependent reduction of N-acetyl-5-glutamyl phosphate to yield N-acetyl-L-glutamate 5-semialdehyde. The sequence is that of N-acetyl-gamma-glutamyl-phosphate reductase from Rhodospirillum rubrum (strain ATCC 11170 / ATH 1.1.1 / DSM 467 / LMG 4362 / NCIMB 8255 / S1).